Reading from the N-terminus, the 408-residue chain is Protein CNPPD1 (408 aa).

Residues 233–253 traverse the membrane as a helical segment; the sequence is CLLAVAYVSSVALAVASMAVI.

It belongs to the CNPPD1 family.

It localises to the membrane. The chain is Protein CNPPD1 (Cnppd1) from Rattus norvegicus (Rat).